The primary structure comprises 124 residues: Small ribosomal subunit protein uS13 (124 aa).

The tract at residues 97–124 (PVRGQRTKTNARTRKGPKRTIAGKKKAR) is disordered.

Belongs to the universal ribosomal protein uS13 family. In terms of assembly, part of the 30S ribosomal subunit. Forms a loose heterodimer with protein S19. Forms two bridges to the 50S subunit in the 70S ribosome.

Its function is as follows. Located at the top of the head of the 30S subunit, it contacts several helices of the 16S rRNA. In the 70S ribosome it contacts the 23S rRNA (bridge B1a) and protein L5 of the 50S subunit (bridge B1b), connecting the 2 subunits; these bridges are implicated in subunit movement. Contacts the tRNAs in the A and P-sites. In Mycolicibacterium gilvum (strain PYR-GCK) (Mycobacterium gilvum (strain PYR-GCK)), this protein is Small ribosomal subunit protein uS13.